Here is a 417-residue protein sequence, read N- to C-terminus: D-amino acid dehydrogenase (417 aa).

Position 3–17 (3–17 (IVVLGGGVVGVTSAW)) interacts with FAD.

The protein belongs to the DadA oxidoreductase family. FAD is required as a cofactor.

The catalysed reaction is a D-alpha-amino acid + A + H2O = a 2-oxocarboxylate + AH2 + NH4(+). It functions in the pathway amino-acid degradation; D-alanine degradation; NH(3) and pyruvate from D-alanine: step 1/1. Its function is as follows. Oxidative deamination of D-amino acids. The sequence is that of D-amino acid dehydrogenase from Aeromonas salmonicida (strain A449).